The chain runs to 197 residues: Protein SYM1 (197 aa).

A run of 4 helical transmembrane segments spans residues 20–40 (AIMTGALFGIGDVSAQLLFPT), 55–75 (AVIYGSLIFSFIGDKWYKILN), 97–117 (VDQLAFAPLGLPFYFTCMSIM), and 137–157 (LLTNWAVWPLFQAINFSVVPL).

This sequence belongs to the peroxisomal membrane protein PXMP2/4 family.

It is found in the mitochondrion inner membrane. May be involved in cellular response to stress. Required to maintain mitochondrial DNA (mtDNA) integrity and stability. Required for ethanol metabolism and tolerance during heat shock. In Saccharomyces cerevisiae (strain ATCC 204508 / S288c) (Baker's yeast), this protein is Protein SYM1 (SYM1).